The following is a 311-amino-acid chain: Aquaporin Lacbi1:392091 (311 aa).

Topologically, residues 1–16 (MHPQVASLFDNVYEDL) are cytoplasmic. The chain crosses the membrane as a helical span at residues 17-37 (AAATLEFIGTAFFLLFGLGGI). At 38-56 (QASTAEDTASGQPPASGIE) the chain is on the extracellular side. The chain crosses the membrane as a helical span at residues 57-77 (HVLYISTCMGLSLVVSAWLFF). Position 78 (R78) is a topological domain, cytoplasmic. A helical transmembrane segment spans residues 79–99 (VTGGLFNPNISFALLLVGGLK). An NPA 1 motif is present at residues 85-87 (NPN). P100 is a topological domain (extracellular). Residues 101 to 121 (LRFVLFCIAQLTGAIAGAAIV) form a helical membrane-spanning segment. Over 122–143 (RGLTSAPLSVNNVLQQGTSAAQ) the chain is Cytoplasmic. The chain crosses the membrane as a helical span at residues 144-164 (GVFIEMFITAALVLSVLMLAA). Topologically, residues 165 to 168 (EKHE) are extracellular. A helical transmembrane segment spans residues 169–189 (ATPFAPVGIGLTLFACHLFAV). Over 190–215 (YYTGAAMNSARAFGPAVISGFPEPQH) the chain is Cytoplasmic. Positions 197–199 (NSA) match the NPA 2 motif. The helical transmembrane segment at 216–236 (WVYWVGPFLGSLLGAGFYATL) threads the bilayer. The Extracellular segment spans residues 237 to 311 (KHYKYWHLNP…TSSRTNFSPV (75 aa)). The tract at residues 276 to 311 (DEETRNGCASNEEGVRATGDEKSSNATSSRTNFSPV) is disordered. Positions 288–298 (EGVRATGDEKS) are enriched in basic and acidic residues. A compositionally biased stretch (polar residues) spans 299-311 (SNATSSRTNFSPV). An N-linked (GlcNAc...) asparagine glycan is attached at N300.

This sequence belongs to the MIP/aquaporin (TC 1.A.8) family.

It localises to the membrane. It catalyses the reaction H2O(in) = H2O(out). It carries out the reaction NH4(+)(in) = NH4(+)(out). In terms of biological role, water channel required to facilitate the transport of water across membranes. Also enables low but statistically significant ammonium permeability. May be involved in fungal nitrogen (ammonium) support of the plant host in symbiosis. In Laccaria bicolor (strain S238N-H82 / ATCC MYA-4686) (Bicoloured deceiver), this protein is Aquaporin Lacbi1:392091.